The chain runs to 654 residues: uncharacterized protein (654 aa).

Residues 1 to 13 (MSNLILTPSNNGT) show a composition bias toward polar residues. The interval 1–23 (MSNLILTPSNNGTERPYRSRKTR) is disordered. The segment at residues 25-54 (CDNCRLRKSRCVVESIGNPCLLCTQLKIPC) is a DNA-binding region (zn(2)-C6 fungal-type). The disordered stretch occupies residues 63–96 (RNKQKKQQDSVSDDTPSEATTTTNDDRDPKYNAL).

The protein resides in the cytoplasm. Its subcellular location is the nucleus. This is an uncharacterized protein from Schizosaccharomyces pombe (strain 972 / ATCC 24843) (Fission yeast).